We begin with the raw amino-acid sequence, 72 residues long: Translation initiation factor IF-1 (72 aa).

The S1-like domain maps to 1 to 72 (MAREDLIEVE…SRGRITYRKK (72 aa)).

This sequence belongs to the IF-1 family. As to quaternary structure, component of the 30S ribosomal translation pre-initiation complex which assembles on the 30S ribosome in the order IF-2 and IF-3, IF-1 and N-formylmethionyl-tRNA(fMet); mRNA recruitment can occur at any time during PIC assembly.

It is found in the cytoplasm. In terms of biological role, one of the essential components for the initiation of protein synthesis. Stabilizes the binding of IF-2 and IF-3 on the 30S subunit to which N-formylmethionyl-tRNA(fMet) subsequently binds. Helps modulate mRNA selection, yielding the 30S pre-initiation complex (PIC). Upon addition of the 50S ribosomal subunit IF-1, IF-2 and IF-3 are released leaving the mature 70S translation initiation complex. In Acholeplasma laidlawii (strain PG-8A), this protein is Translation initiation factor IF-1.